Reading from the N-terminus, the 570-residue chain is Alpha-glucosidase (570 aa).

The Nucleophile role is filled by D206. E263 acts as the Proton donor in catalysis.

The protein belongs to the glycosyl hydrolase 13 family.

It catalyses the reaction Hydrolysis of terminal, non-reducing (1-&gt;4)-linked alpha-D-glucose residues with release of alpha-D-glucose.. The sequence is that of Alpha-glucosidase (MAL2) from Candida albicans (Yeast).